The sequence spans 188 residues: Peptidyl-tRNA hydrolase (188 aa).

Residue Y14 coordinates tRNA. H19 (proton acceptor) is an active-site residue. Positions 64, 66, and 112 each coordinate tRNA.

The protein belongs to the PTH family. As to quaternary structure, monomer.

It localises to the cytoplasm. It catalyses the reaction an N-acyl-L-alpha-aminoacyl-tRNA + H2O = an N-acyl-L-amino acid + a tRNA + H(+). Functionally, hydrolyzes ribosome-free peptidyl-tRNAs (with 1 or more amino acids incorporated), which drop off the ribosome during protein synthesis, or as a result of ribosome stalling. Its function is as follows. Catalyzes the release of premature peptidyl moieties from peptidyl-tRNA molecules trapped in stalled 50S ribosomal subunits, and thus maintains levels of free tRNAs and 50S ribosomes. In Leuconostoc mesenteroides subsp. mesenteroides (strain ATCC 8293 / DSM 20343 / BCRC 11652 / CCM 1803 / JCM 6124 / NCDO 523 / NBRC 100496 / NCIMB 8023 / NCTC 12954 / NRRL B-1118 / 37Y), this protein is Peptidyl-tRNA hydrolase.